The chain runs to 542 residues: MLO-like protein 7 (542 aa).

Residues 1–38 are Extracellular-facing; it reads MITRSRCRRSLLWFLVFHGGATATGAPSGGKELSQTPT. The chain crosses the membrane as a helical span at residues 39–59; it reads WAVAVVCTFLILISHLLEKGL. The Cytoplasmic portion of the chain corresponds to 60–82; sequence QRLANWLWKKHKNSLLEALEKIK. The helical transmembrane segment at 83-103 threads the bilayer; it reads AELMILGFISLLLTFGEPYIL. Residues 104–165 are Extracellular-facing; sequence KICVPRKAAL…ITLKGLHQLH (62 aa). The chain crosses the membrane as a helical span at residues 166–186; it reads ILLFFLAIFHIVYSLITMMLS. The Cytoplasmic segment spans residues 187–288; the sequence is RLKIRGWKKW…IKRSLEDDFK (102 aa). A helical membrane pass occupies residues 289–309; that stretch reads LVVGISPVLWASFVIFLLFNV. The Extracellular portion of the chain corresponds to 310–315; it reads NGWRTL. A helical membrane pass occupies residues 316-336; the sequence is FWASIPPLLIILAVGTKLQAI. Residues 337–374 lie on the Cytoplasmic side of the membrane; the sequence is MATMALEIVETHAVVQGMPLVQGSDRYFWFDCPQLLLH. The helical transmembrane segment at 375 to 395 threads the bilayer; it reads LIHFALFQNAFQITHFFWIWY. Residues 396 to 414 are Extracellular-facing; it reads SFGLKSCFHKDFNLVVSKL. The helical transmembrane segment at 415–435 threads the bilayer; it reads FLCLGALILCSYITLPLYALV. Residues 436-542 are Cytoplasmic-facing; it reads TQMGSHMKKA…QQQEMQFHNS (107 aa). The interval 449–470 is calmodulin-binding; it reads EQMAKALKKWHKDIKLKKGKAR.

This sequence belongs to the MLO family. In terms of tissue distribution, restricted to pollen, synergids, pistils and immature anthers. Also detected in seedlings, leaves, stems and inflorescens.

The protein resides in the cell membrane. The protein localises to the endomembrane system. Functionally, may be involved in modulation of pathogen defense and leaf cell death. Activity seems to be regulated by Ca(2+)-dependent calmodulin binding and seems not to require heterotrimeric G proteins. Controls pollen tube reception in the female gametophyte synergids. The sequence is that of MLO-like protein 7 (MLO7) from Arabidopsis thaliana (Mouse-ear cress).